The chain runs to 559 residues: Formate--tetrahydrofolate ligase (559 aa).

68 to 75 (TPAGEGKT) provides a ligand contact to ATP.

This sequence belongs to the formate--tetrahydrofolate ligase family. As to quaternary structure, homotetramer.

It catalyses the reaction (6S)-5,6,7,8-tetrahydrofolate + formate + ATP = (6R)-10-formyltetrahydrofolate + ADP + phosphate. It functions in the pathway one-carbon metabolism; tetrahydrofolate interconversion. This is Formate--tetrahydrofolate ligase from Moorella thermoacetica (Clostridium thermoaceticum).